The chain runs to 338 residues: MQQSLITKWLSISCIMVIAMIVIGGITRLTGSGLSIVEWRPITGILPPLSFEAWQVEFAKYKAFPEYNYVNYRMTLSQFKFIYLLEFIHRLLGRITALIYIVPLIYFYFKGIIKNRDIAPYIIALLLLYVQGFMGWYMVKSGLLNNPSVSHLRLAFHLIIAVIIYHILFYQLIKNRCDILLILSQTDLKLPLRFSSVAITVIYLQIFLGALVAGLDAGLIYNSFPLMGDNFIPTAIKDNFFDLKNWYDPVFIQCIHRLGGYSVFLVVMALATYLLKIEHPKLNKIAYFLIIALLMQISTGIITLLYSVPIIIASTHQFFAIVLLSVIIWCYFLIKTSK.

The next 5 membrane-spanning stretches (helical) occupy residues 6 to 26, 93 to 113, 118 to 138, 154 to 174, and 201 to 221; these read ITKWLSISCIMVIAMIVIGGI, GRITALIYIVPLIYFYFKGII, IAPYIIALLLLYVQGFMGWYM, LAFHLIIAVIIYHILFYQLIK, and VIYLQIFLGALVAGLDAGLIY. His-256 is a binding site for heme. 3 consecutive transmembrane segments (helical) span residues 258–278, 285–305, and 308–328; these read LGGYSVFLVVMALATYLLKIE, IAYFLIIALLMQISTGIITLL, and VPIIIASTHQFFAIVLLSVII. His-316 serves as a coordination point for heme.

The protein belongs to the COX15/CtaA family. Type 2 subfamily. As to quaternary structure, interacts with CtaB. The cofactor is heme b.

The protein resides in the cell membrane. The enzyme catalyses Fe(II)-heme o + 2 A + H2O = Fe(II)-heme a + 2 AH2. It participates in porphyrin-containing compound metabolism; heme A biosynthesis; heme A from heme O: step 1/1. Its function is as follows. Catalyzes the conversion of heme O to heme A by two successive hydroxylations of the methyl group at C8. The first hydroxylation forms heme I, the second hydroxylation results in an unstable dihydroxymethyl group, which spontaneously dehydrates, resulting in the formyl group of heme A. This is Heme A synthase from Rickettsia canadensis (strain McKiel).